A 106-amino-acid polypeptide reads, in one-letter code: Probable NADP-dependent dehydrogenase in aabA 3'region (106 aa).

4–28 (LITGASSGFGWEAAKLCVAKGHRVI) is an NADP(+) binding site.

This sequence belongs to the short-chain dehydrogenases/reductases (SDR) family.

This is Probable NADP-dependent dehydrogenase in aabA 3'region from Dichelobacter nodosus (Bacteroides nodosus).